Consider the following 394-residue polypeptide: RNA binding protein fox-1 homolog 2 (394 aa).

Disordered stretches follow at residues 1–70 (MGRL…DYAG) and 83–135 (TQAH…HVSN). Polar residues-rich tracts occupy residues 24–36 (RDSQ…TTTP) and 83–103 (TQAH…SLTT). Positions 105-125 (GGAQTDGQQSQTQSSENSESK) are enriched in low complexity. Residues 129–205 (KRLHVSNIPF…RKIEVNNATA (77 aa)) enclose the RRM domain. An Omega-N-methylarginine modification is found at Arg-285. 2 positions are modified to asymmetric dimethylarginine: Arg-301 and Arg-333. Arg-385 and Arg-390 each carry asymmetric dimethylarginine; alternate. Residues Arg-385 and Arg-390 each carry the omega-N-methylarginine; alternate modification.

Interacts with ER-alpha N-terminal activation domain. Interacts with RBPMS; the interaction allows cooperative assembly of stable cell-specific alternative splicing regulatory complexes.

It localises to the nucleus. Its subcellular location is the cytoplasm. RNA-binding protein that regulates alternative splicing events by binding to 5'-UGCAUGU-3' elements. Prevents binding of U2AF2 to the 3'-splice site. Regulates alternative splicing of tissue-specific exons and of differentially spliced exons during erythropoiesis. Seems to act as a coregulatory factor of ER-alpha. Together with RNA binding proteins RBPMS and MBNL1/2, activates vascular smooth muscle cells alternative splicing events. The chain is RNA binding protein fox-1 homolog 2 (RBFOX2) from Bos taurus (Bovine).